The primary structure comprises 82 residues: UPF0180 protein BC_1394 (82 aa).

Belongs to the UPF0180 family.

The chain is UPF0180 protein BC_1394 from Bacillus cereus (strain ATCC 14579 / DSM 31 / CCUG 7414 / JCM 2152 / NBRC 15305 / NCIMB 9373 / NCTC 2599 / NRRL B-3711).